The following is a 97-amino-acid chain: Putative pterin-4-alpha-carbinolamine dehydratase (97 aa).

The protein belongs to the pterin-4-alpha-carbinolamine dehydratase family.

The enzyme catalyses (4aS,6R)-4a-hydroxy-L-erythro-5,6,7,8-tetrahydrobiopterin = (6R)-L-erythro-6,7-dihydrobiopterin + H2O. The sequence is that of Putative pterin-4-alpha-carbinolamine dehydratase from Saccharolobus solfataricus (strain ATCC 35092 / DSM 1617 / JCM 11322 / P2) (Sulfolobus solfataricus).